Reading from the N-terminus, the 161-residue chain is Epoxidase gkaX (161 aa).

Residues 1–18 (MSLSTSLRLLRLLPAISS) form the signal peptide. Asparagine 45 carries an N-linked (GlcNAc...) asparagine glycan. 3 helical membrane-spanning segments follow: residues 59 to 79 (WQWI…LNLV), 92 to 112 (IWYV…KMAL), and 139 to 159 (WVRA…AAVS).

Belongs to the epoxidase xenD family.

Its subcellular location is the membrane. The protein operates within mycotoxin biosynthesis. Its function is as follows. Epoxidase; part of the gene cluster that mediates the biosynthesis of GKK1032, fungal natural products containing a macrocyclic para-cyclophane connected to a decahydrofluorene ring system that show potent antitumor activities. Within the pathway, gkaX functions synergistically with gkaB and gkaZ to form the cyclophane. The pathway begins with the PKS-NRPS gkaA which, with the help of the trans-enoyl reductase gkaC, synthesizes the polyketide-tyrosyl acyl thioester product which can be reductively off-loaded by the terminal reductase (R) domain in gkaA. The alpha/beta hydrolase gkaG is then required to catalyze the subsequent Knoevenagel condensation that affords the 3-pyrrolin-2-one ring, whereas the three proteins gkaB, gkaX and gkaZ then function synergistically to form the cyclophane. The sequence is that of Epoxidase gkaX from Penicillium citrinum.